Here is a 67-residue protein sequence, read N- to C-terminus: MAAKKGVKTSTKKSDYYKVEGNTVERLKKACPKCGAGVFMAEHLNRFACGKCGYLEYKKNEKTETEE.

Residues cysteine 31, cysteine 34, cysteine 49, and cysteine 52 each contribute to the Zn(2+) site. A C4-type zinc finger spans residues cysteine 31–cysteine 52.

This sequence belongs to the eukaryotic ribosomal protein eS31 family. Part of the 30S ribosomal subunit. Zn(2+) serves as cofactor.

In Methanococcus maripaludis (strain C5 / ATCC BAA-1333), this protein is Small ribosomal subunit protein eS31.